The following is an 880-amino-acid chain: Probable receptor-like protein kinase At5g38990 (880 aa).

Residues 1–21 form the signal peptide; it reads MICHVLVIFTILVSAVVDATA. Over 22-440 the chain is Extracellular; that stretch reads SYEPTDVFLI…GKGKSSHVLP (419 aa). 8 N-linked (GlcNAc...) asparagine glycosylation sites follow: asparagine 46, asparagine 136, asparagine 158, asparagine 210, asparagine 256, asparagine 263, asparagine 297, and asparagine 324. Residues 441 to 461 traverse the membrane as a helical segment; the sequence is IIIAVVGSAVALAFFVLVVVL. Topologically, residues 462-880 are cytoplasmic; that stretch reads VVMKRKKKSN…FSEINEPKAR (419 aa). A disordered region spans residues 471–505; sequence NESSVDTTNKPSTNSSWGPLLHGTGSTNTKSASSL. Composition is skewed to polar residues over residues 472-487 and 494-505; these read ESSV…NSSW and TGSTNTKSASSL. A Protein kinase domain is found at 525–810; sequence FEEKLIIGVG…EFALQLHETA (286 aa). Residues 531 to 539 and lysine 554 contribute to the ATP site; that span reads IGVGGFGSV. Aspartate 653 serves as the catalytic Proton acceptor. The interval 820–846 is disordered; it reads LDLMPSGEVGTTTDGEDDLFSRTTGHV.

It belongs to the protein kinase superfamily. Ser/Thr protein kinase family.

The protein resides in the membrane. In Arabidopsis thaliana (Mouse-ear cress), this protein is Probable receptor-like protein kinase At5g38990.